The following is a 523-amino-acid chain: Sensory neuron membrane protein 1 (523 aa).

Over 1–11 (MQLPRELKYAA) the chain is Cytoplasmic. Residues 12 to 32 (IAGGVALFGLIFGWVLFPTIL) traverse the membrane as a helical segment. Topologically, residues 33 to 458 (KSQLKKEMAL…HQLFIPKRVV (426 aa)) are extracellular. Asn-229 carries N-linked (GlcNAc...) asparagine glycosylation. Intrachain disulfides connect Cys-268–Cys-333, Cys-297–Cys-352, and Cys-335–Cys-341. Asn-440 is a glycosylation site (N-linked (GlcNAc...) asparagine). A helical transmembrane segment spans residues 459–479 (GVLRWWMVSFGSLGAVIGIVF). Residues 480–523 (HFRDHIMRLAVSGDTKVSKVIPEVEEQKDISVIGQAQEPAKVNI) lie on the Cytoplasmic side of the membrane.

It belongs to the CD36 family.

The protein localises to the cell membrane. Functionally, plays an olfactory role that is not restricted to pheromone sensitivity. This Helicoverpa assulta (Oriental tobacco budworm) protein is Sensory neuron membrane protein 1.